The sequence spans 200 residues: Serine/arginine-rich splicing factor RSZ22 (200 aa).

The region spanning 2 to 71 is the RRM domain; the sequence is SRVYVGNLDP…NGWRVEQSHN (70 aa). Residues 62–83 show a composition bias toward basic and acidic residues; sequence NGWRVEQSHNRGERGGGGRGGD. Disordered regions lie at residues 62-97 and 112-200; these read NGWR…RGGS and RECR…RSRS. Positions 84–96 are enriched in gly residues; the sequence is RGGGGGGRGGRGG. Residues 99 to 116 form a CCHC-type zinc finger; the sequence is LKCYECGETGHFARECRN. Basic residues predominate over residues 120–137; the sequence is TGRRRSKSRSRTPPRYRR. Phosphoserine occurs at positions 138, 147, 152, 160, 162, 174, and 200. A compositionally biased stretch (low complexity) spans 138–150; sequence SPSYGRRSYSPRA. A compositionally biased stretch (pro residues) spans 151-166; that stretch reads RSPPPPRRRSPSPPPA.

This sequence belongs to the splicing factor SR family. RSZ subfamily. In terms of assembly, component of the spliceosome. Interacts with AFC2, RS2Z33 and RNU1. In terms of processing, extensively phosphorylated on serine residues in the RS domain. Phosphorylated by AFC2. As to expression, expressed in primary and lateral roots, stems, petioles, abaxial and adaxial epidermis cells, trichomes, unopened flowers, anther filaments, anthers, stigma, pollen, pollen tube, ovule funiculi, integuments, embryo sac and developing seeds.

Its subcellular location is the nucleus speckle. The protein resides in the nucleus. It is found in the nucleolus. The protein localises to the nucleoplasm. It localises to the cytoplasm. Functionally, sequence-specific RNA-binding protein probably involved in pre-mRNA splicing. In vitro, can complement efficiently splicing-deficient mammalian SRSF7-depleted HeLa cell extract. The protein is Serine/arginine-rich splicing factor RSZ22 (RSZ22) of Arabidopsis thaliana (Mouse-ear cress).